A 920-amino-acid polypeptide reads, in one-letter code: Plasma membrane ATPase (920 aa).

A compositionally biased stretch (basic and acidic residues) spans 1-11 (MSDERITEKPP). Residues 1–71 (MSDERITEKP…AEEDDGPAAA (71 aa)) are disordered. The Cytoplasmic portion of the chain corresponds to 1-117 (MSDERITEKP…REESENLLVK (117 aa)). Residues 17 to 50 (SEGEPVPEEEVEEETEEEVPDEQSSEDDDIDGLI) show a composition bias toward acidic residues. Residues 118 to 138 (FLMFFIGPIQFVMEAAAVLAA) form a helical membrane-spanning segment. At 139–142 (GLED) the chain is on the extracellular side. A helical membrane pass occupies residues 143–162 (WVDFGVICGLLFLNAGVGFI). Residues 163–293 (QEFQAGSIVE…GQGHFTEVLN (131 aa)) lie on the Cytoplasmic side of the membrane. The helical transmembrane segment at 294 to 315 (GIGVILLVLVVITLLLIWTACF) threads the bilayer. Residues 316–326 (YRTVRIVPILR) lie on the Extracellular side of the membrane. Residues 327–349 (YTLGITIVGVPVGLPAVVTTTMA) form a helical membrane-spanning segment. Residues 350-721 (GGAAYLAKKQ…IAILNHSLDI (372 aa)) lie on the Cytoplasmic side of the membrane. Residue aspartate 380 is the 4-aspartylphosphate intermediate of the active site. Aspartate 636 and aspartate 640 together coordinate Mg(2+). A helical transmembrane segment spans residues 722 to 740 (DLIVFIAIFADVATLAIAY). Over 741-756 (DNAPFSPSPVKWNLPR) the chain is Extracellular. The helical transmembrane segment at 757–776 (LWGMSIMMGIILAAGTWITL) threads the bilayer. Residues 777–826 (TTMFLPKGGIIQNFGSIDGILFLEISLTENWLIFITRAVGPFWSSIPSWQ) lie on the Cytoplasmic side of the membrane. The helical transmembrane segment at 827-847 (LAGAVFVVDVVATMFTLFGWW) threads the bilayer. The Extracellular segment spans residues 848 to 859 (SQNWTDIVTVVR). Residues 860-876 (IYIWSIGIFCCLGGAYY) traverse the membrane as a helical segment. At 877-920 (LMSESETFDRLMNGKPLKENKSTRSVEDFLASMRRVSTQHEKGN) the chain is on the cytoplasmic side.

It belongs to the cation transport ATPase (P-type) (TC 3.A.3) family. Type IIIA subfamily.

The protein localises to the cell membrane. The catalysed reaction is ATP + H2O + H(+)(in) = ADP + phosphate + 2 H(+)(out). In terms of biological role, the plasma membrane ATPase of plants and fungi is a hydrogen ion pump. The proton gradient it generates drives the active transport of nutrients by H(+)-symport. The resulting external acidification and/or internal alkinization may mediate growth responses. The protein is Plasma membrane ATPase of Zygosaccharomyces rouxii.